The primary structure comprises 241 residues: Triosephosphate isomerase (241 aa).

Substrate is bound at residue 9–11 (NWK). The active-site Electrophile is H96. The Proton acceptor role is filled by E165. Residues G171, S204, and 225–226 (GG) each bind substrate.

The protein belongs to the triosephosphate isomerase family. In terms of assembly, homodimer.

It localises to the cytoplasm. It catalyses the reaction D-glyceraldehyde 3-phosphate = dihydroxyacetone phosphate. The protein operates within carbohydrate biosynthesis; gluconeogenesis. Its pathway is carbohydrate degradation; glycolysis; D-glyceraldehyde 3-phosphate from glycerone phosphate: step 1/1. Functionally, involved in the gluconeogenesis. Catalyzes stereospecifically the conversion of dihydroxyacetone phosphate (DHAP) to D-glyceraldehyde-3-phosphate (G3P). The protein is Triosephosphate isomerase of Nostoc sp. (strain PCC 7120 / SAG 25.82 / UTEX 2576).